Here is a 321-residue protein sequence, read N- to C-terminus: Porin Omp2a (321 aa).

The first 22 residues, 1–22 (MNIKSLLLGSAAALVAASGAQA), serve as a signal peptide directing secretion.

It belongs to the alphaproteobacteria porin family. In terms of assembly, monomer.

The protein resides in the cell outer membrane. Functionally, forms passive diffusion pores that allow small molecular weight hydrophilic materials across the outer membrane. The protein is Porin Omp2a (omp2a) of Brucella abortus (strain S19).